A 712-amino-acid chain; its full sequence is MAEYTRSISFYGREIDINIGLMAPQAGCGVWLTSGETSILVTATRQPGRPGVDFMPLLVDYEERLYAAGRIPGGYLRREGRPPERATLISRLIDRPIRPLFPEWLRDDVQVVATTLSVDDTVPPDVLCILGASLAIHGARIPFNGPVAAVRVGLVKDEFILNPTYAEIEAGDLDLVVAGCADGVIMVEAGANQLPEKDVVEAIEFGFEAIQELLKAQQQVLADLNITPVELPPPPKNEELIAFVEEQAQEGIRSILRQFLDKTSREQQLEELKAKLEAQIQERPEGDPLRLYLLENPKELDNQFKALLKKLMRQQILQEGVRVDGRKLDEVRPVSCRVGLIPRVHGSALFNRGLTQVLSITTLGTPGDAQELDDLHPVDEKRYMHHYNFPGFSVGETRPSRSPGRREIGHGALAERALVPVLPKEEEFPYVVRVVSEVLSSNGSTSMGSVCGSTLSLMDAGVPIKAPVSGVAMGLIKEGDEVRILTDIQGIEDFLGDMDFKVAGTRAGITALQMDMKITGITVDVVEQAIRQAKAGREFILDKMLETIAAPRPQLAKTAPRLLTFKVDPEDIGKIIGPGGKTVRGITEATGAKVDISDDGTITVSSSVGGQAEAARAMIENLVRRVEEGQVYLGKVTRIIPIGAFVEFLPGKEGMIHISQLAEYRVGRVEDEVAVEDEVVVKVRSIDHKGRINLTRLGISPEEAARVRNHHH.

Mg(2+)-binding residues include Asp493 and Asp499. Residues 560 to 619 (PRLLTFKVDPEDIGKIIGPGGKTVRGITEATGAKVDISDDGTITVSSSVGGQAEAARAMI) form the KH domain. An S1 motif domain is found at 629–697 (GQVYLGKVTR…HKGRINLTRL (69 aa)).

It belongs to the polyribonucleotide nucleotidyltransferase family. The cofactor is Mg(2+).

Its subcellular location is the cytoplasm. The catalysed reaction is RNA(n+1) + phosphate = RNA(n) + a ribonucleoside 5'-diphosphate. Functionally, involved in mRNA degradation. Catalyzes the phosphorolysis of single-stranded polyribonucleotides processively in the 3'- to 5'-direction. This is Polyribonucleotide nucleotidyltransferase from Synechococcus sp. (strain JA-2-3B'a(2-13)) (Cyanobacteria bacterium Yellowstone B-Prime).